A 46-amino-acid polypeptide reads, in one-letter code: GLFSKFNKKKIKSGLFKIIKTAGKEAGLEALRTGIDVIGCKIKGEC.

An intrachain disulfide couples Cys-40 to Cys-46.

Expressed by the skin glands.

The protein localises to the secreted. In terms of biological role, mast cell degranulating peptide. Causes histamine release from rat peritoneal mast cells in vitro. Has antibacterial activity against the Gram-negative bacterium E.coli K12 and Gram-positive bacterium M.luteus NCT C2665. This is Esculentin-1SEb from Lithobates sevosus (Dusky gopher frog).